The primary structure comprises 92 residues: Small archaeal modifier protein 3 (92 aa).

Residues Lys-18, Lys-55, and Lys-62 each participate in a glycyl lysine isopeptide (Lys-Gly) (interchain with G-Cter in SAMP3) cross-link. Position 92 is a glycyl adenylate; alternate (Gly-92). Gly-92 is covalently cross-linked (Glycyl lysine isopeptide (Gly-Lys) (interchain with K-? in acceptor proteins); alternate).

As to quaternary structure, monomer. Post-translationally, the C-terminal glycine is likely acyl-adenylated (-COAMP) by UbaA.

In terms of biological role, functions as a protein modifier covalently attached to lysine residues of substrate proteins. The protein modification process is termed sampylation and involves the formation of an isopeptide bond between the SAMP3 C-terminal glycine carboxylate and the epsilon-amino group of lysine residues on target proteins. Seems to be able to form polymeric chains with itself at Lys-18, Lys-55 and Lys-62, similar to ubiquitin and other ubiquitin-like proteins. SAMP3 appears not to serve as a proteolytic signal in the cell to target proteins for degradation by proteasomes. May regulate molybdenum cofactor (MoCo) biosynthesis by inhibiting the activity of MPT synthase MoaE under aerobic conditions, providing a hierarchy of oxygen use prior to that of alternative electron acceptors such as DMSO. The polypeptide is Small archaeal modifier protein 3 (samp3) (Haloferax volcanii (strain ATCC 29605 / DSM 3757 / JCM 8879 / NBRC 14742 / NCIMB 2012 / VKM B-1768 / DS2) (Halobacterium volcanii)).